The sequence spans 229 residues: ATP-dependent dethiobiotin synthetase BioD (229 aa).

12–17 (GAGKTI) is an ATP binding site. Residue Thr16 coordinates Mg(2+). Lys38 is an active-site residue. ATP is bound by residues Asp46, 105-108 (EGVG), and 165-166 (SE). Positions 46 and 105 each coordinate Mg(2+).

It belongs to the dethiobiotin synthetase family. Homodimer. Mg(2+) serves as cofactor.

The protein resides in the cytoplasm. The enzyme catalyses (7R,8S)-7,8-diammoniononanoate + CO2 + ATP = (4R,5S)-dethiobiotin + ADP + phosphate + 3 H(+). The catalysed reaction is (7R,8S)-8-amino-7-(carboxyamino)nonanoate + ATP = (4R,5S)-dethiobiotin + ADP + phosphate + H(+). Its pathway is cofactor biosynthesis; biotin biosynthesis; biotin from 7,8-diaminononanoate: step 1/2. Functionally, catalyzes a mechanistically unusual reaction, the ATP-dependent insertion of CO2 between the N7 and N8 nitrogen atoms of 7,8-diaminopelargonic acid (DAPA, also called 7,8-diammoniononanoate) to form a ureido ring. This cyanobacterium does not encode bioA (which catalyzes the formation of the precursor for this reaction in the cannonical pathway), instead it encodes bioU, which replaces bioA and also performs the first half of the cannonical BioD reaction. Thus in this organism BioD has a different substrate. The polypeptide is ATP-dependent dethiobiotin synthetase BioD (Gloeobacter violaceus (strain ATCC 29082 / PCC 7421)).